Consider the following 863-residue polypeptide: Disintegrin and metalloproteinase domain-containing protein 15 (863 aa).

The first 17 residues, 1 to 17 (MRLALLWALGLLGAGSP), serve as a signal peptide directing secretion. Residues 18–206 (LPSWPLPNIG…LGQRHIRRRR (189 aa)) constitute a propeptide that is removed on maturation. The disordered stretch occupies residues 22–45 (PLPNIGGTEEQQAESEKAPREPLE). Residues 35–44 (ESEKAPREPL) are compositionally biased toward basic and acidic residues. The Cysteine switch motif lies at 177 to 184 (HTCALSWR). Position 179 (Cys-179) interacts with Zn(2+). Topologically, residues 207–696 (DVVTETKTVE…QLKATSSLTT (490 aa)) are extracellular. A Peptidase M12B domain is found at 213–414 (KTVELVIVAD…GMGSCLFERL (202 aa)). N-linked (GlcNAc...) asparagine glycosylation is present at Asn-237. Cystine bridges form between Cys-323–Cys-409, Cys-365–Cys-393, Cys-367–Cys-376, and Cys-480–Cys-500. His-348 lines the Zn(2+) pocket. The active site involves Glu-349. Positions 352 and 358 each coordinate Zn(2+). 2 N-linked (GlcNAc...) asparagine glycosylation sites follow: Asn-389 and Asn-392. One can recognise a Disintegrin domain in the interval 421–508 (AAFCGNMFVE…QCPPDVSLGD (88 aa)). A Cell attachment site motif is present at residues 484-486 (RGD). N-linked (GlcNAc...) asparagine glycosylation is found at Asn-606 and Asn-611. 3 disulfide bridges follow: Cys-657–Cys-667, Cys-661–Cys-673, and Cys-675–Cys-684. Residues 657–685 (CRSKCHGHGVCDSNRHCYCEEGWAPPDCT) form the EGF-like domain. A helical transmembrane segment spans residues 697–717 (GLLLSLLVLLVLVMLGASYWY). Phosphotyrosine; by HCK and LCK occurs at positions 715 and 735. At 718–863 (RARLHQRLCQ…PPPTVSSLYL (146 aa)) the chain is on the cytoplasmic side. Residues 736–863 (RAAQSGPSER…PPPTVSSLYL (128 aa)) form a disordered region. Residues 767–778 (PAPPSRPLPPDP) are compositionally biased toward pro residues. A compositionally biased stretch (basic and acidic residues) spans 779 to 789 (VSKRLQAELAD). 2 stretches are compositionally biased toward pro residues: residues 791–800 (PNPPTRPLPA) and 813–824 (AKPPPPRKPLPA). Short sequence motifs (SH3-binding) lie at residues 815 to 821 (PPPPRKP) and 850 to 856 (RPAPPPP).

As to quaternary structure, interacts with ITAGV-ITGB3 (vitronectin receptor). Interacts with SH3GL2 and SNX9; this interaction occurs preferentially with ADAM15 precursor, rather than the processed form, suggesting it occurs in a secretory pathway compartment prior to the medial Golgi. Interacts with ITAG9-ITGB1. Interacts specifically with Src family protein-tyrosine kinases (PTKs). Interacts with SH3PXD2A. Interacts with ITAGV-ITGB1. Interacts with GRB2, HCK, ITSN1, ITSN2, LYN, MAPK1, MAPK3, NCF1, NCK1, nephrocystin, PTK6, SNX33, LCK and SRC. The cofactor is Zn(2+). In terms of processing, the precursor is cleaved by a furin endopeptidase. Post-translationally, phosphorylation increases association with PTKs. In terms of tissue distribution, expressed in colon and small intestine. Expressed in airway smooth muscle and glomerular mesangial cells (at protein level). Ubiquitously expressed. Overexpressed in atherosclerotic lesions. Constitutively expressed in cultured endothelium and smooth muscle. Expressed in chondrocytes. Expressed in airway smooth muscle and glomerular mesangial cells.

Its subcellular location is the endomembrane system. The protein localises to the cell junction. The protein resides in the adherens junction. It is found in the cell projection. It localises to the cilium. Its subcellular location is the flagellum. The protein localises to the cytoplasmic vesicle. The protein resides in the secretory vesicle. It is found in the acrosome. Inhibited by hydroxamate-type metalloproteinase inhibitors such as marimastat. Inhibited by metalloproteinase inhibitor 2 (TIMP-2) and TIMP-3 at nanomolar concentrations. Not significantly inhibited by TIMP-1 at concentrations of up to 100 nM. Not activated by PMA or ionomycin. In terms of biological role, active metalloproteinase with gelatinolytic and collagenolytic activity. Plays a role in the wound healing process. Mediates both heterotypic intraepithelial cell/T-cell interactions and homotypic T-cell aggregation. Inhibits beta-1 integrin-mediated cell adhesion and migration of airway smooth muscle cells. Suppresses cell motility on or towards fibronectin possibly by driving alpha-v/beta-1 integrin (ITAGV-ITGB1) cell surface expression via ERK1/2 inactivation. Cleaves E-cadherin in response to growth factor deprivation. Plays a role in glomerular cell migration. Plays a role in pathological neovascularization. May play a role in cartilage remodeling. May be proteolytically processed, during sperm epididymal maturation and the acrosome reaction. May play a role in sperm-egg binding through its disintegrin domain. The polypeptide is Disintegrin and metalloproteinase domain-containing protein 15 (ADAM15) (Homo sapiens (Human)).